We begin with the raw amino-acid sequence, 126 residues long: Large ribosomal subunit protein bL12 (126 aa).

It belongs to the bacterial ribosomal protein bL12 family. Homodimer. Part of the ribosomal stalk of the 50S ribosomal subunit. Forms a multimeric L10(L12)X complex, where L10 forms an elongated spine to which 2 to 4 L12 dimers bind in a sequential fashion. Binds GTP-bound translation factors.

In terms of biological role, forms part of the ribosomal stalk which helps the ribosome interact with GTP-bound translation factors. Is thus essential for accurate translation. The protein is Large ribosomal subunit protein bL12 of Acidovorax sp. (strain JS42).